The primary structure comprises 327 residues: Flotillin-like protein FloA (327 aa).

Residues 7-27 (FLVPILIVILLLVFFSLVPVG) form a helical membrane-spanning segment.

The protein belongs to the flotillin-like FloA family. Homooligomerizes.

It is found in the cell membrane. Its subcellular location is the membrane raft. Functionally, found in functional membrane microdomains (FMM) that may be equivalent to eukaryotic membrane rafts. FMMs are highly dynamic and increase in number as cells age. Flotillins are thought to be important factors in membrane fluidity. The chain is Flotillin-like protein FloA from Finegoldia magna (strain ATCC 29328 / DSM 20472 / WAL 2508) (Peptostreptococcus magnus).